We begin with the raw amino-acid sequence, 104 residues long: Large ribosomal subunit protein uL24 (104 aa).

The protein belongs to the universal ribosomal protein uL24 family. As to quaternary structure, part of the 50S ribosomal subunit.

Functionally, one of two assembly initiator proteins, it binds directly to the 5'-end of the 23S rRNA, where it nucleates assembly of the 50S subunit. In terms of biological role, one of the proteins that surrounds the polypeptide exit tunnel on the outside of the subunit. The chain is Large ribosomal subunit protein uL24 from Yersinia enterocolitica serotype O:8 / biotype 1B (strain NCTC 13174 / 8081).